Here is a 179-residue protein sequence, read N- to C-terminus: MIIYLHGFDSTSPGNHEKVLQLQFIDDDVRFINYSTLHPKHDMQHLLKEVSKVIDQSDDPNPLICGVGLGGYWSERIGFLCGIKQVMFNPNLHPENTMAGRIDRPEEYEDIATKCVDQFRAKNQGRCLVILSKEDEIHDNTKTASELEKHYDIIWDESQSHKFKKISQHLQAMKEFKNT.

It belongs to the UPF0227 family.

The sequence is that of UPF0227 protein VP0969 from Vibrio parahaemolyticus serotype O3:K6 (strain RIMD 2210633).